We begin with the raw amino-acid sequence, 160 residues long: Large ribosomal subunit protein uL22c (160 aa).

The protein belongs to the universal ribosomal protein uL22 family. As to quaternary structure, part of the 50S ribosomal subunit.

The protein localises to the plastid. It localises to the chloroplast. In terms of biological role, this protein binds specifically to 23S rRNA. Functionally, the globular domain of the protein is located near the polypeptide exit tunnel on the outside of the subunit, while an extended beta-hairpin is found that lines the wall of the exit tunnel in the center of the 70S ribosome. The polypeptide is Large ribosomal subunit protein uL22c (rpl22) (Arabis hirsuta (Hairy rock-cress)).